The following is a 160-amino-acid chain: Endoribonuclease YbeY (160 aa).

Positions 112, 116, and 122 each coordinate Zn(2+). The disordered stretch occupies residues 141–160 (ELGHPDPYACDDEEPPSKEK).

The protein belongs to the endoribonuclease YbeY family. Zn(2+) is required as a cofactor.

The protein resides in the cytoplasm. Functionally, single strand-specific metallo-endoribonuclease involved in late-stage 70S ribosome quality control and in maturation of the 3' terminus of the 16S rRNA. This Pseudomonas paraeruginosa (strain DSM 24068 / PA7) (Pseudomonas aeruginosa (strain PA7)) protein is Endoribonuclease YbeY.